The following is a 156-amino-acid chain: Small ribosomal subunit protein uS7 (156 aa).

The protein belongs to the universal ribosomal protein uS7 family. Part of the 30S ribosomal subunit. Contacts proteins S9 and S11.

In terms of biological role, one of the primary rRNA binding proteins, it binds directly to 16S rRNA where it nucleates assembly of the head domain of the 30S subunit. Is located at the subunit interface close to the decoding center, probably blocks exit of the E-site tRNA. This Rhodopseudomonas palustris (strain BisB5) protein is Small ribosomal subunit protein uS7.